Here is a 372-residue protein sequence, read N- to C-terminus: uncharacterized protein (372 aa).

A PNPLA domain is found at 38-270 (FFIEGGGTKG…ANNIPLDYLI (233 aa)). Residues 42–47 (GGGTKG) carry the GXGXXG motif. A GXSXG motif is present at residues 74 to 78 (GTSVG). Serine 76 (nucleophile) is an active-site residue. Aspartate 257 (proton acceptor) is an active-site residue. The short motif at 257–259 (DGG) is the DGA/G element.

Functionally, probable lipid hydrolase. This is an uncharacterized protein from Acanthamoeba polyphaga (Amoeba).